The chain runs to 478 residues: Leukotoxin secretion protein D (478 aa).

The Cytoplasmic portion of the chain corresponds to 1-77; it reads MKIWLSGIYE…LAVAIVLASV (77 aa). A helical transmembrane segment spans residues 78–98; the sequence is SKVEIVATAPGKLTFSGRSKE. Over 99 to 478 the chain is Periplasmic; that stretch reads IKPIENTIVQ…ESVTESLRER (380 aa).

The protein belongs to the membrane fusion protein (MFP) (TC 8.A.1) family.

It is found in the cell inner membrane. Functionally, involved in the transport of the Leukotoxin. The polypeptide is Leukotoxin secretion protein D (lktD) (Pasteurella haemolytica-like sp. (strain 5943B)).